The following is a 321-amino-acid chain: AA9 family lytic polysaccharide monooxygenase A (321 aa).

The signal sequence occupies residues 1–21; it reads MFRAQSFLPVLALVLRVAAHG. Position 20 (histidine 20) interacts with Cu(2+). An intrachain disulfide couples cysteine 71 to cysteine 197. The N-linked (GlcNAc...) asparagine glycan is linked to asparagine 72. Histidine 105 is a binding site for Cu(2+). N-linked (GlcNAc...) asparagine glycosylation occurs at asparagine 157. Residues histidine 183 and glutamine 192 each coordinate O2. Cu(2+) is bound at residue tyrosine 194. Residues 278–306 are disordered; the sequence is SSSAAATQSSSAAPSSSAIGTSTASSAAA. A lipid anchor (GPI-anchor amidated serine) is attached at serine 293. A propeptide spans 294 to 321 (removed in mature form); the sequence is SAIGTSTASSAAASGTAIVDANTCMNSA.

It belongs to the polysaccharide monooxygenase AA9 family. It depends on Cu(2+) as a cofactor.

It is found in the cell membrane. It carries out the reaction [(1-&gt;4)-beta-D-glucosyl]n+m + reduced acceptor + O2 = 4-dehydro-beta-D-glucosyl-[(1-&gt;4)-beta-D-glucosyl]n-1 + [(1-&gt;4)-beta-D-glucosyl]m + acceptor + H2O.. Lytic polysaccharide monooxygenase (LPMO) that depolymerizes crystalline and amorphous polysaccharides via the oxidation of scissile alpha- or beta-(1-4)-glycosidic bonds, yielding C1 or C4 oxidation products. Catalysis by LPMOs requires the reduction of the active-site copper from Cu(II) to Cu(I) by a reducing agent and H(2)O(2) or O(2) as a cosubstrate. Has broad specificity, cleaving at any position along the beta-glucan backbone of xyloglucan, regardless of substitutions. Shows minor activity on glucomannan. The sequence is that of AA9 family lytic polysaccharide monooxygenase A from Gloeophyllum trabeum (strain ATCC 11539 / FP-39264 / Madison 617) (Brown rot fungus).